A 151-amino-acid chain; its full sequence is UPF0756 membrane protein Moth_0120 (151 aa).

A run of 4 helical transmembrane segments spans residues 6–26 (VILI…IAAA), 52–72 (AGLI…RVAP), 75–95 (MLQS…IIAT), and 111–131 (MMIG…GIPV).

This sequence belongs to the UPF0756 family.

The protein localises to the cell membrane. The polypeptide is UPF0756 membrane protein Moth_0120 (Moorella thermoacetica (strain ATCC 39073 / JCM 9320)).